A 152-amino-acid polypeptide reads, in one-letter code: Deoxyuridine 5'-triphosphate nucleotidohydrolase (152 aa).

Substrate is bound by residues 72–74 (RSG), N85, and 89–91 (TID).

Belongs to the dUTPase family. It depends on Mg(2+) as a cofactor.

It carries out the reaction dUTP + H2O = dUMP + diphosphate + H(+). Its pathway is pyrimidine metabolism; dUMP biosynthesis; dUMP from dCTP (dUTP route): step 2/2. This enzyme is involved in nucleotide metabolism: it produces dUMP, the immediate precursor of thymidine nucleotides and it decreases the intracellular concentration of dUTP so that uracil cannot be incorporated into DNA. This Rhodopseudomonas palustris (strain ATCC BAA-98 / CGA009) protein is Deoxyuridine 5'-triphosphate nucleotidohydrolase.